We begin with the raw amino-acid sequence, 519 residues long: DNA damage-binding protein CMR1 (519 aa).

A disordered region spans residues 35 to 92; the sequence is AEAGLGPTGKSRAAASSKPRVKKPAPKKIKQEDIAPRRTSSRLKGIEADSEKAKRKAE. Residues 53 to 62 are compositionally biased toward basic residues; that stretch reads PRVKKPAPKK. Basic and acidic residues predominate over residues 78–92; it reads KGIEADSEKAKRKAE. WD repeat units follow at residues 240 to 280, 287 to 327, 331 to 371, 380 to 420, 442 to 485, and 488 to 519; these read PHTR…AVEV, NEDQ…DQAE, LSEK…GKGD, EHES…EWAT, GRWV…LAQL, and DGIT…CLWM.

It belongs to the WD repeat DDB2/WDR76 family.

Functionally, DNA-binding protein that binds to both single- and double-stranded DNA. Binds preferentially to UV-damaged DNA. May be involved in DNA-metabolic processes. The polypeptide is DNA damage-binding protein CMR1 (Phaeosphaeria nodorum (strain SN15 / ATCC MYA-4574 / FGSC 10173) (Glume blotch fungus)).